Reading from the N-terminus, the 261-residue chain is Syntaxin-7 (261 aa).

Residue S2 is modified to N-acetylserine. At 2-238 the chain is on the cytoplasmic side; sequence SYTPGIGGDS…DYQRKSRKTL (237 aa). T4 carries the post-translational modification Phosphothreonine. The residue at position 45 (S45) is a Phosphoserine. Residues 47–68 adopt a coiled-coil conformation; sequence ELRQLLQQKQQYTNQLAKETDK. S75 is modified (phosphoserine). Phosphothreonine is present on T79. 4 positions are modified to phosphoserine: S125, S126, S129, and S205. Residues 128–148 are disordered; sequence VSGGFPEDSSKEKNLVSWESQ. The t-SNARE coiled-coil homology domain occupies 165 to 227; sequence LRLIHERESS…QQANQQLSRA (63 aa). Residues 239-259 traverse the membrane as a helical; Anchor for type IV membrane protein segment; it reads CIIIFILVVRIVIICLIVWGL. The Vesicular segment spans residues 260–261; the sequence is KG.

Belongs to the syntaxin family. As to quaternary structure, interacts with VPS11, VPS16 and VPS18. Interacts with VPS33A. Forms a SNARE complex with VTI1B, STX8 and VAMP8 which functions in the homotypic fusion of late endosomes. Component of the SNARE complex composed of STX7, STX8, VAMP7 and VTI1B that is required for heterotypic fusion of late endosomes with lysosomes. Interacts with TPC1.

Its subcellular location is the early endosome membrane. Its function is as follows. May be involved in protein trafficking from the plasma membrane to the early endosome (EE) as well as in homotypic fusion of endocytic organelles. Mediates the endocytic trafficking from early endosomes to late endosomes and lysosomes. The polypeptide is Syntaxin-7 (Stx7) (Mus musculus (Mouse)).